Here is a 215-residue protein sequence, read N- to C-terminus: MPLAPPPEKMMFQLSLRRRGISDQAVLRAMDAVPRDLFVTPDLRDEAWRDTALPIACGQTISQPFVVAYMTEQLQLKPEHRVLEIGTGSGYQAAVLSRLCQQVLTLERFKTLADSARARLESLECHNVEVQLGDGFDVPAKAGLFDRILVTAAMEEVPGALIARLDLDGILIAPVGPHQATQTLVRIRNAKGGIERKELVAVRFVPALPGIAREL.

S62 is a catalytic residue.

Belongs to the methyltransferase superfamily. L-isoaspartyl/D-aspartyl protein methyltransferase family.

It is found in the cytoplasm. The catalysed reaction is [protein]-L-isoaspartate + S-adenosyl-L-methionine = [protein]-L-isoaspartate alpha-methyl ester + S-adenosyl-L-homocysteine. Catalyzes the methyl esterification of L-isoaspartyl residues in peptides and proteins that result from spontaneous decomposition of normal L-aspartyl and L-asparaginyl residues. It plays a role in the repair and/or degradation of damaged proteins. This chain is Protein-L-isoaspartate O-methyltransferase, found in Rhodopseudomonas palustris (strain BisA53).